Here is a 210-residue protein sequence, read N- to C-terminus: Thymidylate kinase (210 aa).

Gly-10–Thr-17 contacts ATP.

It belongs to the thymidylate kinase family.

The catalysed reaction is dTMP + ATP = dTDP + ADP. Functionally, phosphorylation of dTMP to form dTDP in both de novo and salvage pathways of dTTP synthesis. The sequence is that of Thymidylate kinase from Actinobacillus succinogenes (strain ATCC 55618 / DSM 22257 / CCUG 43843 / 130Z).